The sequence spans 66 residues: Large ribosomal subunit protein bL35 (66 aa).

Basic residues predominate over residues 1-26; it reads MPKMKTHRGAAKRVKRTGSGKLKRSR. A disordered region spans residues 1–49; the sequence is MPKMKTHRGAAKRVKRTGSGKLKRSRAFTSHLFANKSTKQKRKLRKASL.

The protein belongs to the bacterial ribosomal protein bL35 family.

The protein is Large ribosomal subunit protein bL35 of Staphylococcus saprophyticus subsp. saprophyticus (strain ATCC 15305 / DSM 20229 / NCIMB 8711 / NCTC 7292 / S-41).